The following is a 1706-amino-acid chain: MNVQAHMSGQRSGQVPNQGTVPQNNGNSQMQNLVGSNGAATAVTGAGAATGSGTGVRPSRNIVGAMDHDIMKLRQYMQTLVFNMLQQRQPSPADAASKAKYMDVARRLEEGLFKMAVTKEDYMNRSTLESRITSLIKGRQINNYNQRHANSSSVGTMIPTPGLSQTAGNPNLMVTSSVDATIVGNTNITSTALNTGNPLIAGGMHGGNMSNGYQHSSRNFSLGSGGSMTSMGAQRSTAQMIPTPGFVNSVTNNNSGGFSAEPTIVPQSQQQQQRQHTGGQNSHMLSNHMAAGVRPDMQSKPSGAANSSVNGDVGANEKIVDSGSSYTNASKKLQQGNFSLLSFCPDDLISGQHIESTFHISGEGYSTTNPDPFDGAITSAGTGTKAHNINTASFQPVSRVNSSLSHQQQFQQPPNRFQQQPNQIQQQQQQFLNQRKLKQQTPQQHRLISNDGLGKTQVDSDMVTKVKCEPGMENKSQAPQSQASERFQLSQLQNQYQNSGEDCQADAQLLPVESQSDICTSLPQNSQQIQQMMHPQNIGSDSSNSFSNLAVGVKSESSPQGQWPSKSQENTLMSNAISSGKHIQEDFRQRITGMDEAQPNNLTEGSVIGQNHTSTISESHNLQNSIGTTCRYGNVSHDPKFKNQQRWLLFLRHARSCKPPGGRCQDQNCVTVQKLWSHMDNCADPQCLYPRCRHTKALIGHYKNCKDPRCPVCVPVKTYQQQANVRALARLKNESSAVGSVNRSVVSNDSLSANAGAVSGTPRCADTLDNLQPSLKRLKVEQSFQPVVPKTESCKSSIVSTTEADLSQDAERKDHRPLKSETMEVKVEIPDNSVQAGFGIKETKSEPFENVPKPKPVSEPGKHGLSGDSPKQENIKMKKEPGWPKKEPGCPKKEELVESPELTSKSRKPKIKGVSLTELFTPEQVREHIRGLRQWVGQSKAKAEKNQAMENSMSENSCQLCAVEKLTFEPPPIYCTPCGARIKRNAMYYTVGGGETRHYFCIPCYNESRGDTILAEGTSMPKAKLEKKKNDEEIEESWVQCDKCQAWQHQICALFNGRRNDGGQAEYTCPYCYVIDVEQNERKPLLQSAVLGAKDLPRTILSDHIEQRLFKRLKQERTERARVQGTSYDEIPTVESLVVRVVSSVDKKLEVKSRFLEIFREDNFPTEFPYKSKVVLLFQKIEGVEVCLFGMYVQEFGSECSNPNQRRVYLSYLDSVKYFRPDIKSANGEALRTFVYHEILIGYLEYCKLRGFTSCYIWACPPLKGEDYILYCHPEIQKTPKSDKLREWYLAMLRKAAKEGIVAETTNLYDHFFLQTGECRAKVTAARLPYFDGDYWPGAAEDIISQMSQEDDGRKGNKKGILKKPITKRALKASGQSDFSGNASKDLLLMHKLGETIHPMKEDFIMVHLQHSCTHCCTLMVTGNRWVCSQCKDFQLCDGCYEAEQKREDRERHPVNQKDKHNIFPVEIADIPTDTKDRDEILESEFFDTRQAFLSLCQGNHYQYDTLRRAKHSSMMVLYHLHNPTAPAFVTTCNVCHLDIESGLGWRCEVCPDYDVCNACYKKEGCINHPHKLTTHPSLADQNAQNKEARQLRVLQLRKMLDLLVHASQCRSPVCLYPNCRKVKGLFRHGLRCKVRASGGCVLCKKMWYLLQLHARACKESECDVPRCGDLKEHLRRLQQQSDSRRRAAVMEMMRQRAAEVAGTSG.

4 disordered regions span residues 1–33 (MNVQAHMSGQRSGQVPNQGTVPQNNGNSQMQNL), 251–284 (TNNNSGGFSAEPTIVPQSQQQQQRQHTGGQNSHM), 397–456 (VSRV…LGKT), and 524–543 (QNSQQIQQMMHPQNIGSDSS). A compositionally biased stretch (polar residues) spans 397-406 (VSRVNSSLSH). A compositionally biased stretch (low complexity) spans 407-434 (QQQFQQPPNRFQQQPNQIQQQQQQFLNQ). A TAZ-type 1 zinc finger spans residues 637–716 (HDPKFKNQQR…DPRCPVCVPV (80 aa)). The segment at 791 to 909 (TESCKSSIVS…PELTSKSRKP (119 aa)) is disordered. Polar residues predominate over residues 794–805 (CKSSIVSTTEAD). Basic and acidic residues-rich tracts occupy residues 809 to 829 (DAERKDHRPLKSETMEVKVEI) and 870 to 896 (PKQENIKMKKEPGWPKKEPGCPKKEEL). The PHD-type zinc finger occupies 998 to 1075 (HYFCIPCYNE…EYTCPYCYVI (78 aa)). Residues 1090-1526 (VLGAKDLPRT…VLYHLHNPTA (437 aa)) enclose the CBP/p300-type HAT domain. Acetyl-CoA-binding positions include 1213 to 1215 (LDS), 1232 to 1233 (RT), and Trp-1288. 2 ZZ-type zinc fingers span residues 1408-1471 (HLQH…IADI) and 1528-1581 (AFVT…SLAD). 16 residues coordinate Zn(2+): Cys-1413, Cys-1416, Cys-1428, Cys-1431, Cys-1437, Cys-1440, His-1453, His-1461, Cys-1533, Cys-1536, Cys-1548, Cys-1551, Cys-1557, Cys-1560, His-1569, and His-1571. Residues 1588–1671 (EARQLRVLQL…ECDVPRCGDL (84 aa)) form a TAZ-type 2 zinc finger.

It is found in the nucleus. It carries out the reaction L-lysyl-[protein] + acetyl-CoA = N(6)-acetyl-L-lysyl-[protein] + CoA + H(+). Acetyltransferase enzyme. Acetylates histones, giving a specific tag for transcriptional activation. This Arabidopsis thaliana (Mouse-ear cress) protein is Histone acetyltransferase HAC12 (HAC12).